We begin with the raw amino-acid sequence, 441 residues long: MATSKPASIAMISLGCPKALVDSERILTQLRTEGYQVTPSYDDADVVVVNTCGFIDSAKAESLEAIGEAIAENGKVIVTGCMGVEESVIREIHPSVLAVTGPQQYEQVVLEVHRAAPPKADHNPYVDLVPPQGVKLTPRHYAYLKISEGCNHRCSFCIIPSMRGDLVSRPVGDVLSEAERLVKAGVKELLVISQDTSAYGVDLKYRSGFWNGRPIKTRMTELCAALSELGVWTRLHYVYPYPHVDEVIPLMAQGKVLPYLDIPFQHASPRILKAMKRPAFEDKTLARIKRWREECPDLTLRSTFIVGFPGETEADFQYLLDWMSEAQLDRVGCFQYSPVNGAPANELDGAVPDEVKQERWDRFMAHQQAISAARLQTRVGREIDVLIDEVNADGAVGRSSADAPEIDGCVYVGNAATLRPGDMARVRITAADEYDLHGDAV.

In terms of domain architecture, MTTase N-terminal spans 7-117 (ASIAMISLGC…VVLEVHRAAP (111 aa)). Residues cysteine 16, cysteine 52, cysteine 81, cysteine 150, cysteine 154, and cysteine 157 each contribute to the [4Fe-4S] cluster site. In terms of domain architecture, Radical SAM core spans 136 to 373 (LTPRHYAYLK…MAHQQAISAA (238 aa)). The 66-residue stretch at 376-441 (QTRVGREIDV…DEYDLHGDAV (66 aa)) folds into the TRAM domain.

Belongs to the methylthiotransferase family. RimO subfamily. [4Fe-4S] cluster is required as a cofactor.

Its subcellular location is the cytoplasm. It catalyses the reaction L-aspartate(89)-[ribosomal protein uS12]-hydrogen + (sulfur carrier)-SH + AH2 + 2 S-adenosyl-L-methionine = 3-methylsulfanyl-L-aspartate(89)-[ribosomal protein uS12]-hydrogen + (sulfur carrier)-H + 5'-deoxyadenosine + L-methionine + A + S-adenosyl-L-homocysteine + 2 H(+). Functionally, catalyzes the methylthiolation of an aspartic acid residue of ribosomal protein uS12. This chain is Ribosomal protein uS12 methylthiotransferase RimO, found in Bordetella petrii (strain ATCC BAA-461 / DSM 12804 / CCUG 43448).